Here is a 319-residue protein sequence, read N- to C-terminus: Cell surface A33 antigen (319 aa).

An N-terminal signal peptide occupies residues 1–21 (MLGKAGSVVWMLCAIWVAADA). The Ig-like V-type domain maps to 22-134 (LTVETTQDIL…QDVNAKSRVR (113 aa)). The Extracellular segment spans residues 22-235 (LTVETTQDIL…VAPRPPSMNI (214 aa)). Intrachain disulfides connect C43–C117, C146–C222, and C162–C211. N99, N112, N200, and N223 each carry an N-linked (GlcNAc...) asparagine glycan. Residues 140–227 (PPSKPDCSIQ…GIESCNITVA (88 aa)) form the Ig-like C2-type domain. The chain crosses the membrane as a helical span at residues 236–256 (ALYAGIAGGVFVALIIIGVIV). Residues 257–319 (YCCCCREKDD…GRSTPDQPFQ (63 aa)) are Cytoplasmic-facing. Composition is skewed to basic and acidic residues over residues 267-276 (KDQDREDARP) and 284-308 (PKKE…DRWS). A disordered region spans residues 267-319 (KDQDREDARPNRAAYQVPKKEQKEISRGREDEDDHRHEDRWSSGRSTPDQPFQ). Over residues 309 to 319 (SGRSTPDQPFQ) the composition is skewed to polar residues.

Post-translationally, palmitoylated.

It localises to the membrane. May play a role in cell-cell recognition and signaling. This is Cell surface A33 antigen (Gpa33) from Mus musculus (Mouse).